The chain runs to 151 residues: MQEGQNRKTSSLSILAIAGVEPYQEKPGEEYMNEAQLSHFKRILEAWRNQLRDEVDRTVTHMQDEAANFPDPVDRAAQEEEFSLELRNRDRERKLIKKIEKTLKKVEDEDFGYCESCGVEIGIRRLEARPTADLCIDCKTLAEIREKQMAG.

Residues glutamate 34 to glutamate 54 are a coiled coil. Residues cysteine 114, cysteine 117, cysteine 135, and cysteine 138 each coordinate Zn(2+). Residues cysteine 114–cysteine 138 form a dksA C4-type zinc finger.

Belongs to the DksA family. Interacts directly with the RNA polymerase.

The protein localises to the cytoplasm. Its function is as follows. Transcription factor that acts by binding directly to the RNA polymerase (RNAP). Required for negative regulation of rRNA expression and positive regulation of several amino acid biosynthesis promoters. Also required for regulation of fis expression. The polypeptide is RNA polymerase-binding transcription factor DksA (Salmonella typhi).